An 85-amino-acid polypeptide reads, in one-letter code: MELQKIEQILKDTLNIAEVYAQGENAHFGVIVVSDEIAALSRVKQQQTIYAPLMPYFSTGEIHALTIKTYTVEKWKRDRALNQFN.

It belongs to the BolA/IbaG family.

This is an uncharacterized protein from Haemophilus influenzae (strain ATCC 51907 / DSM 11121 / KW20 / Rd).